The primary structure comprises 246 residues: NH(3)-dependent NAD(+) synthetase (246 aa).

ATP is bound at residue 29–36; the sequence is GLSGGIDS. Asp-35 lines the Mg(2+) pocket. Arg-110 is a deamido-NAD(+) binding site. ATP is bound at residue Thr-130. Mg(2+) is bound at residue Glu-135. ATP-binding residues include Lys-159 and Ser-181.

The protein belongs to the NAD synthetase family. In terms of assembly, homodimer.

The enzyme catalyses deamido-NAD(+) + NH4(+) + ATP = AMP + diphosphate + NAD(+) + H(+). Its pathway is cofactor biosynthesis; NAD(+) biosynthesis; NAD(+) from deamido-NAD(+) (ammonia route): step 1/1. Functionally, catalyzes the ATP-dependent amidation of deamido-NAD to form NAD. Uses ammonia as a nitrogen source. The polypeptide is NH(3)-dependent NAD(+) synthetase (Campylobacter jejuni subsp. jejuni serotype O:23/36 (strain 81-176)).